The following is a 293-amino-acid chain: 4-diphosphocytidyl-2-C-methyl-D-erythritol kinase (293 aa).

Residue K16 is part of the active site. 99 to 109 (PMGAGLGGGSS) provides a ligand contact to ATP. The active site involves D141.

It belongs to the GHMP kinase family. IspE subfamily.

It carries out the reaction 4-CDP-2-C-methyl-D-erythritol + ATP = 4-CDP-2-C-methyl-D-erythritol 2-phosphate + ADP + H(+). It functions in the pathway isoprenoid biosynthesis; isopentenyl diphosphate biosynthesis via DXP pathway; isopentenyl diphosphate from 1-deoxy-D-xylulose 5-phosphate: step 3/6. In terms of biological role, catalyzes the phosphorylation of the position 2 hydroxy group of 4-diphosphocytidyl-2C-methyl-D-erythritol. This is 4-diphosphocytidyl-2-C-methyl-D-erythritol kinase from Paraburkholderia phytofirmans (strain DSM 17436 / LMG 22146 / PsJN) (Burkholderia phytofirmans).